The sequence spans 96 residues: UPF0235 protein Tola_0962 (96 aa).

It belongs to the UPF0235 family.

The protein is UPF0235 protein Tola_0962 of Tolumonas auensis (strain DSM 9187 / NBRC 110442 / TA 4).